The sequence spans 352 residues: Ion-translocating oxidoreductase complex subunit D (352 aa).

Helical transmembrane passes span 20–40 (IMLL…WFFG), 42–62 (GTLV…ALVL), 78–109 (ALLT…VIIA), 123–143 (PAMI…TSWL), and 148–168 (IAVN…GHTA). Threonine 187 carries the FMN phosphoryl threonine modification. 5 consecutive transmembrane segments (helical) span residues 214-234 (ILAG…GVWL), 242-262 (WHIP…GWLF), 267-287 (LAAP…FFIL), 301-321 (LIFG…GGYP), and 322-342 (DGVA…DYYT).

It belongs to the NqrB/RnfD family. In terms of assembly, the complex is composed of six subunits: RsxA, RsxB, RsxC, RsxD, RsxE and RsxG. It depends on FMN as a cofactor.

It is found in the cell inner membrane. Its function is as follows. Part of a membrane-bound complex that couples electron transfer with translocation of ions across the membrane. Required to maintain the reduced state of SoxR. This chain is Ion-translocating oxidoreductase complex subunit D, found in Escherichia coli O157:H7.